Here is a 61-residue protein sequence, read N- to C-terminus: Large ribosomal subunit protein eL29y (61 aa).

The interval 1-61 (MAKSKNHTAH…KSGENAGVEE (61 aa)) is disordered. Positions 15–31 (KAHKNGIKKPRRHRHTP) are enriched in basic residues.

This sequence belongs to the eukaryotic ribosomal protein eL29 family.

The protein is Large ribosomal subunit protein eL29y (RPL29B) of Arabidopsis thaliana (Mouse-ear cress).